A 315-amino-acid chain; its full sequence is Ornithine carbamoyltransferase, anabolic (315 aa).

Carbamoyl phosphate contacts are provided by residues 57-60 (STRT), Q84, R108, and 135-138 (HPCQ). L-ornithine-binding positions include N166, D230, and 234 to 235 (SM). Carbamoyl phosphate is bound by residues 270 to 271 (CL) and R298.

The protein belongs to the aspartate/ornithine carbamoyltransferase superfamily. OTCase family. As to quaternary structure, homododecamer (tetramer of trimers).

Its subcellular location is the cytoplasm. The enzyme catalyses carbamoyl phosphate + L-ornithine = L-citrulline + phosphate + H(+). The protein operates within amino-acid biosynthesis; L-arginine biosynthesis; L-arginine from L-ornithine and carbamoyl phosphate: step 1/3. Its activity is regulated as follows. Inhibited by the bisubstrate delta-N-phosphonoacetyl-L-ornithine (PALO). Its function is as follows. Reversibly catalyzes the transfer of the carbamoyl group from carbamoyl phosphate (CP) to the N(epsilon) atom of ornithine (ORN) to produce L-citrulline, which is a substrate for argininosuccinate synthetase, the enzyme involved in the final step in arginine biosynthesis. The protein is Ornithine carbamoyltransferase, anabolic of Pyrococcus furiosus (strain ATCC 43587 / DSM 3638 / JCM 8422 / Vc1).